A 642-amino-acid polypeptide reads, in one-letter code: 1-deoxy-D-xylulose-5-phosphate synthase 2 (642 aa).

Residues H79 and A120–S122 contribute to the thiamine diphosphate site. D155 is a binding site for Mg(2+). Thiamine diphosphate contacts are provided by residues G156–S157, N184, Y293, and E375. Mg(2+) is bound at residue N184.

This sequence belongs to the transketolase family. DXPS subfamily. As to quaternary structure, homodimer. Mg(2+) serves as cofactor. Thiamine diphosphate is required as a cofactor.

It catalyses the reaction D-glyceraldehyde 3-phosphate + pyruvate + H(+) = 1-deoxy-D-xylulose 5-phosphate + CO2. The protein operates within metabolic intermediate biosynthesis; 1-deoxy-D-xylulose 5-phosphate biosynthesis; 1-deoxy-D-xylulose 5-phosphate from D-glyceraldehyde 3-phosphate and pyruvate: step 1/1. Its function is as follows. Catalyzes the acyloin condensation reaction between C atoms 2 and 3 of pyruvate and glyceraldehyde 3-phosphate to yield 1-deoxy-D-xylulose-5-phosphate (DXP). This Roseobacter denitrificans (strain ATCC 33942 / OCh 114) (Erythrobacter sp. (strain OCh 114)) protein is 1-deoxy-D-xylulose-5-phosphate synthase 2.